Reading from the N-terminus, the 471-residue chain is Ubiquitin carboxyl-terminal hydrolase calypso (471 aa).

In terms of domain architecture, UCH catalytic spans 45–276 (GWLELESDPG…IRFNLMAVVP (232 aa)). Cys-131 (nucleophile) is an active-site residue. The active-site Proton donor is the His-213. 2 coiled-coil regions span residues 240 to 256 (WEDS…VMAE) and 298 to 324 (GTLQ…DTPT). Residues 307–326 (DEQGESGNGDSQRPDTPTTL) are disordered. Positions 314 to 326 (NGDSQRPDTPTTL) are enriched in polar residues. In terms of domain architecture, ULD spans 375–403 (NYDKFICTFLSMLAHQGVLGELVSQHLLP). The positively charged C-terminal tail required for binding nucleosomes stretch occupies residues 405-471 (KKVSGQGAAN…KGRNKCRKRK (67 aa)). The tract at residues 412 to 471 (AANRISKQSTTASAGGSTAAGTASTPKTQQQQAAAAKNGKSPSKTPGRRRKGRNKCRKRK) is disordered. A compositionally biased stretch (low complexity) spans 420–447 (STTASAGGSTAAGTASTPKTQQQQAAAA). Residues 457-471 (PGRRRKGRNKCRKRK) show a composition bias toward basic residues.

The protein belongs to the peptidase C12 family. BAP1 subfamily. Catalytic component of the polycomb repressive deubiquitinase (PR-DUB) complex, at least composed of caly/calypso, Asx and sba (MBD5/6 homolog). The PR-DUB complex associates with nucleosomes to mediate deubiquitination of histone H2AK118ub1 substrates; the association requires the positively charged C-terminal tail of caly, probably due to direct binding of DNA. Interacts (via ULD domain) with Asx (via DEUBAD domain); the interaction produces a stable heterodimer with a composite binding site for ubiquitin. Homodimerizes (via coiled-coil hinge-region between the UCH and ULD domains) to mediate assembly of 2 copies of the caly-Asx heterodimer into a bisymmetric tetramer; dimerization enhances PR-DUB association with nucleosomes.

It localises to the nucleus. It catalyses the reaction Thiol-dependent hydrolysis of ester, thioester, amide, peptide and isopeptide bonds formed by the C-terminal Gly of ubiquitin (a 76-residue protein attached to proteins as an intracellular targeting signal).. Catalytic component of the polycomb repressive deubiquitinase (PR-DUB) complex, a complex that specifically mediates deubiquitination of histone H2A monoubiquitinated at 'Lys-119' (H2AK118ub1). Mediates bisymmetric organization of the PR-DUB complex and is involved in association with nucleosomes to mediate deubiquitination. Does not deubiquitinate monoubiquitinated histone H2B. Required to maintain the transcriptionally repressive state of homeotic genes throughout development. The PR-DUB complex has weak or no activity toward 'Lys-48'- and 'Lys-63'-linked polyubiquitin chains. Polycomb group (PcG) protein. This chain is Ubiquitin carboxyl-terminal hydrolase calypso, found in Drosophila melanogaster (Fruit fly).